Reading from the N-terminus, the 298-residue chain is MQSIFDRVTVKNLFEVGAHLGHKTRFWNPKMVSYIYGTSNAKTHIVDLQKTVPMLRTALNAISDVAANSGRVLFVGTKMQACDIIKEEATRCGQYYVNLRWPSGMFTNWNTVSKSVKKLVHYEKLLEQEGDVLSKKERLSINRKRERIEKYLGGVRKMGGLPNIIFVIDPKKEHIAVEEAWKLGIPVVAVVDTNCDPSKITYAIPGNDDSLRCIEYYCSLVADAVLVGIESELQRKQSKELDDKADEKAAKVSHSDGQKKGASIRAGTDKAALQKRKVSPKSEKQDNVDAAKLPENKG.

Basic and acidic residues-rich tracts occupy residues 237-259 (QSKE…DGQK) and 280-298 (PKSE…ENKG). Positions 237–298 (QSKELDDKAD…DAAKLPENKG (62 aa)) are disordered.

This sequence belongs to the universal ribosomal protein uS2 family.

In Neorickettsia sennetsu (strain ATCC VR-367 / Miyayama) (Ehrlichia sennetsu), this protein is Small ribosomal subunit protein uS2.